The sequence spans 932 residues: Isoleucine--tRNA ligase (932 aa).

The 'HIGH' region motif lies at 57-67; it reads PYANGDIHMGH. L-isoleucyl-5'-AMP is bound at residue glutamate 556. The 'KMSKS' region signature appears at 597-601; the sequence is KMSKS. Position 600 (lysine 600) interacts with ATP. Cysteine 891, cysteine 894, cysteine 911, and cysteine 914 together coordinate Zn(2+).

It belongs to the class-I aminoacyl-tRNA synthetase family. IleS type 1 subfamily. In terms of assembly, monomer. Zn(2+) serves as cofactor.

The protein localises to the cytoplasm. It carries out the reaction tRNA(Ile) + L-isoleucine + ATP = L-isoleucyl-tRNA(Ile) + AMP + diphosphate. Catalyzes the attachment of isoleucine to tRNA(Ile). As IleRS can inadvertently accommodate and process structurally similar amino acids such as valine, to avoid such errors it has two additional distinct tRNA(Ile)-dependent editing activities. One activity is designated as 'pretransfer' editing and involves the hydrolysis of activated Val-AMP. The other activity is designated 'posttransfer' editing and involves deacylation of mischarged Val-tRNA(Ile). This is Isoleucine--tRNA ligase from Lactiplantibacillus plantarum (strain ATCC BAA-793 / NCIMB 8826 / WCFS1) (Lactobacillus plantarum).